Reading from the N-terminus, the 633-residue chain is Bifunctional enzyme CysN/CysC (633 aa).

Positions Met1 to Gln463 are sulfate adenylyltransferase. Residues Lys22 to Leu241 enclose the tr-type G domain. A G1 region spans residues Gly31–Ser38. Gly31–Ser38 contributes to the GTP binding site. Residues Gly89–Asp93 form a G2 region. Residues Asp110–Gly113 form a G3 region. Residues Asp110–His114 and Asn165–Asp168 contribute to the GTP site. The segment at Asn165–Asp168 is G4. Residues Ser204 to Leu206 are G5. Residues Gln464 to Ile633 are adenylyl-sulfate kinase. Gly472–Ser479 contributes to the ATP binding site.

It in the C-terminal section; belongs to the APS kinase family. This sequence in the N-terminal section; belongs to the TRAFAC class translation factor GTPase superfamily. Classic translation factor GTPase family. CysN/NodQ subfamily. As to quaternary structure, heterodimer composed of CysD, the smaller subunit, and CysNC.

It catalyses the reaction sulfate + ATP + H(+) = adenosine 5'-phosphosulfate + diphosphate. The enzyme catalyses adenosine 5'-phosphosulfate + ATP = 3'-phosphoadenylyl sulfate + ADP + H(+). Its pathway is sulfur metabolism; hydrogen sulfide biosynthesis; sulfite from sulfate: step 1/3. It participates in sulfur metabolism; hydrogen sulfide biosynthesis; sulfite from sulfate: step 2/3. Its function is as follows. With CysD forms the ATP sulfurylase (ATPS) that catalyzes the adenylation of sulfate producing adenosine 5'-phosphosulfate (APS) and diphosphate, the first enzymatic step in sulfur assimilation pathway. APS synthesis involves the formation of a high-energy phosphoric-sulfuric acid anhydride bond driven by GTP hydrolysis by CysN coupled to ATP hydrolysis by CysD. In terms of biological role, APS kinase catalyzes the synthesis of activated sulfate. In Pseudomonas aeruginosa (strain ATCC 15692 / DSM 22644 / CIP 104116 / JCM 14847 / LMG 12228 / 1C / PRS 101 / PAO1), this protein is Bifunctional enzyme CysN/CysC (cysNC).